A 527-amino-acid polypeptide reads, in one-letter code: Glutamate--cysteine ligase (527 aa).

Belongs to the glutamate--cysteine ligase type 1 family. Type 1 subfamily.

It catalyses the reaction L-cysteine + L-glutamate + ATP = gamma-L-glutamyl-L-cysteine + ADP + phosphate + H(+). Its pathway is sulfur metabolism; glutathione biosynthesis; glutathione from L-cysteine and L-glutamate: step 1/2. The protein is Glutamate--cysteine ligase of Pseudomonas aeruginosa (strain UCBPP-PA14).